Consider the following 240-residue polypeptide: MATLFIADLHLQTEEPAIVAGFLRFLAVEARQADALYILGDLFEAWIGDDDPNPLHREMAVAIKSLVDSGVPCFFIHGNRDFLIGKRFARESGMILLPQEKVLDLYGRNVLIMHGDTLCTDDAGYQAFRAKVHNPWIQRLFLTLPLFIRRRIAARMRAGSKAANSSKSLDIMDVNAQTVVAEMEKHRVQWLVHGHTHRPAVHELSANDQPAFRVVLGAWHHEGSMVKVTPDNVELIAFPL.

Aspartate 8, histidine 10, aspartate 41, asparagine 79, and histidine 114 together coordinate Mn(2+). 79–80 (NR) contributes to the substrate binding site. Substrate-binding residues include aspartate 122, serine 160, asparagine 164, lysine 167, and histidine 195. Mn(2+)-binding residues include histidine 195 and histidine 197.

The protein belongs to the LpxH family. Mn(2+) is required as a cofactor.

It is found in the cell inner membrane. It carries out the reaction UDP-2-N,3-O-bis[(3R)-3-hydroxytetradecanoyl]-alpha-D-glucosamine + H2O = 2-N,3-O-bis[(3R)-3-hydroxytetradecanoyl]-alpha-D-glucosaminyl 1-phosphate + UMP + 2 H(+). It functions in the pathway glycolipid biosynthesis; lipid IV(A) biosynthesis; lipid IV(A) from (3R)-3-hydroxytetradecanoyl-[acyl-carrier-protein] and UDP-N-acetyl-alpha-D-glucosamine: step 4/6. In terms of biological role, hydrolyzes the pyrophosphate bond of UDP-2,3-diacylglucosamine to yield 2,3-diacylglucosamine 1-phosphate (lipid X) and UMP by catalyzing the attack of water at the alpha-P atom. Involved in the biosynthesis of lipid A, a phosphorylated glycolipid that anchors the lipopolysaccharide to the outer membrane of the cell. The polypeptide is UDP-2,3-diacylglucosamine hydrolase (Salmonella schwarzengrund (strain CVM19633)).